The primary structure comprises 226 residues: E3 ubiquitin-protein ligase RNF186 (226 aa).

The segment at 39-85 (CLVCREPYNCARSPKLLSCQHTFCAVCLKLLLYVQEDTWSIPCPLCR) adopts an RING-type zinc-finger fold. 2 helical membrane passes run 157-177 (HLLL…PGVI) and 179-199 (WVLA…CCHP).

In terms of assembly, interacts with BNIP1. Post-translationally, polyubiquitinated. 'Lys-29'-linked autoubiquitination leads to proteasomal degradation.

Its subcellular location is the endoplasmic reticulum membrane. The catalysed reaction is S-ubiquitinyl-[E2 ubiquitin-conjugating enzyme]-L-cysteine + [acceptor protein]-L-lysine = [E2 ubiquitin-conjugating enzyme]-L-cysteine + N(6)-ubiquitinyl-[acceptor protein]-L-lysine.. The protein operates within protein modification; protein ubiquitination. E3 ubiquitin protein ligase that is part of an apoptotic signaling pathway activated by endoplasmic reticulum stress. Stimulates the expression of proteins specific of the unfolded protein response (UPR), ubiquitinates BNIP1 and regulates its localization to the mitochondrion and induces calcium release from the endoplasmic reticulum that ultimately leads to cell apoptosis. Plays a role in the maintenance of intestinal homeostasis and clearance of enteric pathogens. Upon NOD2 stimulation, ubiquitinates the ER stress sensor activating transcription factor 6/ATF6 and promotes the unfolded protein response UPR. Participates in basal level of autophagy maintenance by regulating the ubiquitination of EPHB2. Upon stimulation by ligand EFNB1, ubiquitinates EPHB2 and further recruits MAP1LC3B for autophagy induction. Controls nutrient sensing by ubiquitinating Sestrin-2/SESN2, which is an intracellular sensor of cytosolic leucine and inhibitor of mTORC1 activity. The chain is E3 ubiquitin-protein ligase RNF186 from Mus musculus (Mouse).